Reading from the N-terminus, the 171-residue chain is Co-chaperone protein HscB (171 aa).

In terms of domain architecture, J spans 2–74 (DYFTLFGLPA…LMRAEYLLSL (73 aa)).

It belongs to the HscB family. As to quaternary structure, interacts with HscA and stimulates its ATPase activity. Interacts with IscU.

Co-chaperone involved in the maturation of iron-sulfur cluster-containing proteins. Seems to help targeting proteins to be folded toward HscA. In Shigella boydii serotype 18 (strain CDC 3083-94 / BS512), this protein is Co-chaperone protein HscB.